The following is a 200-amino-acid chain: Max dimerization protein 3 (200 aa).

Disordered regions lie at residues Ser-31–Arg-56 and Arg-133–Leu-164. The region spanning Asn-54–Leu-106 is the bHLH domain.

Efficient DNA binding requires dimerization with another bHLH protein. Binds DNA as a heterodimer with MAX. Expressed broadly throughout the CNS and the eye, starting at neurula stages.

It is found in the nucleus. Its function is as follows. Transcriptional repressor. Binds with MAX to form a sequence-specific DNA-binding protein complex which recognizes the core sequence 5'-CAC[GA]TG-3'. The sequence is that of Max dimerization protein 3 (mxd3) from Xenopus laevis (African clawed frog).